We begin with the raw amino-acid sequence, 318 residues long: MWEKCHRQWHKIKFYVKHAHLGLLPPAWLAKSAAAELERFERAPAELRAAIENRVHYYNALSQPFFLPETAPRVCHFPRQKPSSYYYDLKALLRYFPLEQRFSAQFGDVTTIPELPQFVKSRPITKNNENAVLLKLDSVRHFYLYPDRLPFRAKKSQLVWRGAAHQNHRIRFLEHFHQHPLCDVGCIHARSAAKPYHREFMSVKRQLQYRYILSLEGNDVATNLKWIMASNSLCLMPAPRYETWMMEGRLQAGVHYVQLRDDFADLEEQILFFERYPEAAEAIIKNAQQWMSQFARPETELWTALLVMKKYFSLLEPQ.

Belongs to the glycosyltransferase 90 family.

It participates in protein modification; protein glycosylation. Functionally, involved in lipopolysaccharide core biosynthesis. This chain is O-glucosyltransferase LpsA (lpsA), found in Dichelobacter nodosus (Bacteroides nodosus).